Here is a 162-residue protein sequence, read N- to C-terminus: Endoribonuclease YbeY (162 aa).

Zn(2+)-binding residues include H128, H132, and H138.

It belongs to the endoribonuclease YbeY family. Requires Zn(2+) as cofactor.

It localises to the cytoplasm. Functionally, single strand-specific metallo-endoribonuclease involved in late-stage 70S ribosome quality control and in maturation of the 3' terminus of the 16S rRNA. In Levilactobacillus brevis (strain ATCC 367 / BCRC 12310 / CIP 105137 / JCM 1170 / LMG 11437 / NCIMB 947 / NCTC 947) (Lactobacillus brevis), this protein is Endoribonuclease YbeY.